Here is a 261-residue protein sequence, read N- to C-terminus: Potassium/proton antiporter CemA (261 aa).

3 helical membrane-spanning segments follow: residues 138-158 (IISHLLTNLIGFAFISAYLIL), 184-204 (FLILLATDLCIGFHSPHGWEL), and 221-241 (IISGLVSTFPVILDTILKYWI).

Belongs to the CemA family.

It localises to the plastid. The protein localises to the chloroplast inner membrane. It catalyses the reaction K(+)(in) + H(+)(out) = K(+)(out) + H(+)(in). Its function is as follows. Contributes to K(+)/H(+) antiport activity by supporting proton efflux to control proton extrusion and homeostasis in chloroplasts in a light-dependent manner to modulate photosynthesis. Prevents excessive induction of non-photochemical quenching (NPQ) under continuous-light conditions. Indirectly promotes efficient inorganic carbon uptake into chloroplasts. This is Potassium/proton antiporter CemA from Pinus koraiensis (Korean pine).